The chain runs to 295 residues: Ankyrin repeat and SOCS box protein 17 (295 aa).

An ANK repeat occupies 146–176 (SGITPLLYVAQTRQSNILKILLQYGILEREK). The region spanning 232 to 295 (LGRRPIISNW…RLQKYLNLES (64 aa)) is the SOCS box domain.

It belongs to the ankyrin SOCS box (ASB) family.

Its pathway is protein modification; protein ubiquitination. In terms of biological role, may be a substrate-recognition component of a SCF-like ECS (Elongin-Cullin-SOCS-box protein) E3 ubiquitin-protein ligase complex which mediates the ubiquitination and subsequent proteasomal degradation of target proteins. The protein is Ankyrin repeat and SOCS box protein 17 (ASB17) of Canis lupus familiaris (Dog).